A 760-amino-acid polypeptide reads, in one-letter code: Molybdenum cofactor sulfurase 2 (760 aa).

K223 is modified (N6-(pyridoxal phosphate)lysine). C389 is a catalytic residue. The MOSC domain occupies Q608–V758.

Belongs to the class-V pyridoxal-phosphate-dependent aminotransferase family. MOCOS subfamily. It depends on pyridoxal 5'-phosphate as a cofactor.

It catalyses the reaction Mo-molybdopterin + L-cysteine + AH2 = thio-Mo-molybdopterin + L-alanine + A + H2O. Its function is as follows. Sulfurates the molybdenum cofactor. Sulfation of molybdenum is essential for xanthine dehydrogenase (XDH) and aldehyde oxidase (ADO) enzymes in which molybdenum cofactor is liganded by 1 oxygen and 1 sulfur atom in active form. This Culex quinquefasciatus (Southern house mosquito) protein is Molybdenum cofactor sulfurase 2.